The primary structure comprises 329 residues: Sulfate/thiosulfate import ATP-binding protein CysA (329 aa).

An ABC transporter domain is found at 3–237; sequence IEVRNVSKRF…PANDFVYHFL (235 aa). 35–42 provides a ligand contact to ATP; that stretch reads GPSGCGKT.

The protein belongs to the ABC transporter superfamily. Sulfate/tungstate importer (TC 3.A.1.6) family. As to quaternary structure, the complex is composed of two ATP-binding proteins (CysA), two transmembrane proteins (CysT and CysW) and a solute-binding protein (CysP).

It localises to the cell inner membrane. The enzyme catalyses sulfate(out) + ATP + H2O = sulfate(in) + ADP + phosphate + H(+). It catalyses the reaction thiosulfate(out) + ATP + H2O = thiosulfate(in) + ADP + phosphate + H(+). In terms of biological role, part of the ABC transporter complex CysAWTP involved in sulfate/thiosulfate import. Responsible for energy coupling to the transport system. This chain is Sulfate/thiosulfate import ATP-binding protein CysA, found in Pseudomonas putida (strain ATCC 47054 / DSM 6125 / CFBP 8728 / NCIMB 11950 / KT2440).